Reading from the N-terminus, the 457-residue chain is tRNA-2-methylthio-N(6)-dimethylallyladenosine synthase (457 aa).

In terms of domain architecture, MTTase N-terminal spans 4–119; that stretch reads RNFHIITFGC…APDAIERLYA (116 aa). Cys13, Cys48, Cys82, Cys164, Cys168, and Cys171 together coordinate [4Fe-4S] cluster. One can recognise a Radical SAM core domain in the interval 150-385; the sequence is NTLALMAYVN…QATQLEHSTS (236 aa). Residues 388-456 enclose the TRAM domain; the sequence is KSRVGVETTV…KHSLVAEPLI (69 aa).

It belongs to the methylthiotransferase family. MiaB subfamily. Monomer. The cofactor is [4Fe-4S] cluster.

The protein localises to the cytoplasm. It catalyses the reaction N(6)-dimethylallyladenosine(37) in tRNA + (sulfur carrier)-SH + AH2 + 2 S-adenosyl-L-methionine = 2-methylsulfanyl-N(6)-dimethylallyladenosine(37) in tRNA + (sulfur carrier)-H + 5'-deoxyadenosine + L-methionine + A + S-adenosyl-L-homocysteine + 2 H(+). Its function is as follows. Catalyzes the methylthiolation of N6-(dimethylallyl)adenosine (i(6)A), leading to the formation of 2-methylthio-N6-(dimethylallyl)adenosine (ms(2)i(6)A) at position 37 in tRNAs that read codons beginning with uridine. The chain is tRNA-2-methylthio-N(6)-dimethylallyladenosine synthase from Lawsonia intracellularis (strain PHE/MN1-00).